The sequence spans 638 residues: uncharacterized protein (638 aa).

Residues 1-31 (MKFIKFNDSTIDSFLFMMLTDLAKTLTKSEA) form the signal peptide. 4 stretches are compositionally biased toward basic and acidic residues: residues 247-256 (EEKKAPKLSD), 273-284 (EEMPTWHRETEA), 301-310 (DLGKDASREG), and 329-342 (RKDY…ESQK). 2 disordered regions span residues 247–285 (EEKK…TEAP) and 301–354 (DLGK…ADGK). One can recognise a VWFA domain in the interval 445–632 (FTLLVDCSAS…DVLYPLLKKL (188 aa)).

This is an uncharacterized protein from Bacillus subtilis (strain 168).